The following is a 394-amino-acid chain: Protein-glutamate methylesterase/protein-glutamine glutaminase 2 (394 aa).

The Response regulatory domain occupies 4–121; that stretch reads KVLVVDDSSF…ARNRDEAISL (118 aa). Position 55 is a 4-aspartylphosphate (D55). In terms of domain architecture, CheB-type methylesterase spans 202 to 394; it reads SGKKYQLMAI…AERILVEVGR (193 aa). Catalysis depends on residues S214, H241, and D337.

This sequence belongs to the CheB family. Post-translationally, phosphorylated by CheA. Phosphorylation of the N-terminal regulatory domain activates the methylesterase activity.

The protein localises to the cytoplasm. The catalysed reaction is [protein]-L-glutamate 5-O-methyl ester + H2O = L-glutamyl-[protein] + methanol + H(+). It catalyses the reaction L-glutaminyl-[protein] + H2O = L-glutamyl-[protein] + NH4(+). Functionally, involved in chemotaxis. Part of a chemotaxis signal transduction system that modulates chemotaxis in response to various stimuli. Catalyzes the demethylation of specific methylglutamate residues introduced into the chemoreceptors (methyl-accepting chemotaxis proteins or MCP) by CheR. Also mediates the irreversible deamidation of specific glutamine residues to glutamic acid. The polypeptide is Protein-glutamate methylesterase/protein-glutamine glutaminase 2 (Photobacterium profundum (strain SS9)).